The following is a 431-amino-acid chain: UPF0597 protein LCA_0156 (431 aa).

It belongs to the UPF0597 family.

This is UPF0597 protein LCA_0156 from Latilactobacillus sakei subsp. sakei (strain 23K) (Lactobacillus sakei subsp. sakei).